We begin with the raw amino-acid sequence, 626 residues long: MAKKEFKAESKRLLDMMINSIYTQKEIFLRELISNSSDAIDKIYYKALTDDALTFDKDSYYIKVAADKDARTLTISDTGIGMTKDELEQHLGTIAKSGSLAFKKENELKDGHDIIGQFGVGFYAAFMVADVVTVISKALGSEEAYKWESAGADGYTIEPCEKDSVGTDIILKIKENTEDDSYDEFLEEYRLKAIIKKYSDFIRYPIKMDTTINKPKEGSENEFEEVQEEQTVNSMVPIWRKNKSELTDEDYEKFYAEKHYGFDKPLTHVHISVDGAVRYNAILFVPENMPFDYYSKEYEKGLELYSNGVLIMNKCADLLPDHFSFVKGMVDSEDLSLNISREMLQHDRQLKLIAKNISKKIKSELQSLLKKDREKYETFYKSFGRQLKFGVYNDFGANKDQLKDLLLFYSSKEKKLVSLDEYVSRMPEEQKFIYYATGDSYDRIEKLPQTEMVADKGYEILYFTEDIDEFAIKMLASYQEKEFKSVSSGDLGIDTDEDQKQSEEEESKYKDLFEEMKNILSDKVKNVRISKRLKSHPVCLAADGEVTIEMEKILNAMPDSQNVKAEKVLEINPNHEVFQTLQDAFEQDKEKLSLYTNLLYNQALLIEGLPIQDPVEFTNNICKVMV.

Residues Met-1–Arg-341 are a; substrate-binding. The interval Glu-342–Lys-552 is b. The interval Ile-553–Val-626 is c.

This sequence belongs to the heat shock protein 90 family. In terms of assembly, homodimer.

Its subcellular location is the cytoplasm. In terms of biological role, molecular chaperone. Has ATPase activity. This Bacillus subtilis (strain 168) protein is Chaperone protein HtpG.